Here is a 2968-residue protein sequence, read N- to C-terminus: Polyketide synthase 37 (2968 aa).

Positions 32-454 (KEPIAIIGIG…GSNSSLFLSS (423 aa)) constitute a Ketosynthase family 3 (KS3) domain. Residues C198, H338, and H378 each act as for beta-ketoacyl synthase activity in the active site. The tract at residues 624–950 (FIFSGQGQQW…LSTLSKNSNS (327 aa)) is malonyl-CoA:ACP transacylase (MAT) domain. S718 functions as the For malonyltransferase activity in the catalytic mechanism. Residues 1017-1157 (PPMFISLDRK…GIIKYGTNYL (141 aa)) are N-terminal hotdog fold. The region spanning 1017-1350 (PPMFISLDRK…FKGINSSSSS (334 aa)) is the PKS/mFAS DH domain. Residues 1031 to 1345 (TPSFEVRLNQ…LTNLEFKGIN (315 aa)) form a dehydratase (DH) domain region. Residue H1049 is the Proton acceptor; for dehydratase activity of the active site. The C-terminal hotdog fold stretch occupies residues 1183–1350 (FKSFNSNEFY…FKGINSSSSS (168 aa)). D1257 acts as the Proton donor; for dehydratase activity in catalysis. Residues 1522-1547 (SCGGGGGSTNNTISNSSSSISSIDNG) are disordered. The segment covering 1530 to 1547 (TNNTISNSSSSISSIDNG) has biased composition (low complexity). Positions 1718 to 2053 (GIISDLKIKQ…SGNHIGKILI (336 aa)) are enoyl reductase (ER) domain. Positions 2083 to 2277 (TYIFTGFGGL…LKSSCIHLAS (195 aa)) are ketoreductase (KR) domain. Positions 2379–2400 (GDGSFDDLNQLEDEGQQGFGNG) are disordered. The Carrier domain occupies 2421-2498 (FDNDFYTKSI…STVELIKNKL (78 aa)). An O-(pantetheine 4'-phosphoryl)serine modification is found at S2458. A disordered region spans residues 2568–2589 (SSSSNNSNSKNELTSPPPSAKR). Residues 2707 to 2968 (ISHVVGVTST…IEAILFKLIK (262 aa)) form a chalcone synthase region. C2747 is an active-site residue.

Pantetheine 4'-phosphate is required as a cofactor.

The enzyme catalyses (E)-4-coumaroyl-CoA + 3 malonyl-CoA + 3 H(+) = 2',4,4',6'-tetrahydroxychalcone + 3 CO2 + 4 CoA. It catalyses the reaction hexanoyl-CoA + 3 malonyl-CoA + 3 H(+) = 2,4,6-trihydroxyphenylhexan-1-one + 3 CO2 + 4 CoA. It functions in the pathway secondary metabolite biosynthesis; flavonoid biosynthesis. Its function is as follows. Polyketide synthase; part of the gene cluster that mediates the biosynthesis of DIF-1 (Differentiation Inducing Factor-1), a signal molecule involved in the differentiation of pstO (prestalk-O) cells. The three-step process begins with the formation of (2,4,6-trihydroxyphenyl)-1-hexan-1-one (THPH) by the polyketide synthase StlB. THPH is then dichlorinated by the flavin-dependent halogenase ChlA. The last step of DIF-1 biosynthesis is the O-methylation of dichloro-THPH (or des-methyl-DIF-1) by the methyltransferase DmtA to yield DIF-1. The protein is Polyketide synthase 37 (StlB) of Dictyostelium discoideum (Social amoeba).